The chain runs to 397 residues: Zinc finger transcription factor family protein 30 (397 aa).

Residues 1–40 (MKLEDDKIHSPTNTEEEGYGSDVEVENGTDISGSKGGSGV) are disordered. Over residues 14–27 (TEEEGYGSDVEVEN) the composition is skewed to acidic residues. C2H2-type zinc fingers lie at residues 51 to 74 (FRCS…MQAH), 78 to 102 (YKCT…KQHH), and 107 to 125 (YMCR…LHIH).

Its subcellular location is the nucleus. This Caenorhabditis elegans protein is Zinc finger transcription factor family protein 30 (ztf-30).